A 126-amino-acid chain; its full sequence is Follitropin subunit beta (126 aa).

An N-terminal signal peptide occupies residues 1 to 19; it reads MKLIQLCILFWCWRAICCQ. 6 cysteine pairs are disulfide-bonded: Cys-21–Cys-69, Cys-35–Cys-84, Cys-38–Cys-122, Cys-46–Cys-100, Cys-50–Cys-102, and Cys-105–Cys-112. Residues Asn-25 and Asn-42 are each glycosylated (N-linked (GlcNAc...) asparagine).

This sequence belongs to the glycoprotein hormones subunit beta family. In terms of assembly, heterodimer. The active follitropin is a heterodimer composed of an alpha chain/CGA shared with other hormones and a unique beta chain/FSHB shown here.

The protein resides in the secreted. In terms of biological role, together with the alpha chain CGA constitutes follitropin, the follicle-stimulating hormone, and provides its biological specificity to the hormone heterodimer. Binds FSHR, a G protein-coupled receptor, on target cells to activate downstream signaling pathways. Follitropin is involved in follicle development and spermatogenesis in reproductive organs. The sequence is that of Follitropin subunit beta (FSHB) from Phodopus sungorus (Striped hairy-footed hamster).